Here is a 461-residue protein sequence, read N- to C-terminus: Peptidyl-prolyl cis-trans isomerase-like 4 (461 aa).

One can recognise a PPIase cyclophilin-type domain in the interval Met1 to Ile171. Residues Glu205–Met234 are a coiled coil. The 79-residue stretch at Asn248–Ser326 folds into the RRM domain. The segment at Lys341–Arg461 is disordered. 2 stretches are compositionally biased toward basic and acidic residues: residues Asp365–Ala384 and Ser398–Arg461.

It belongs to the cyclophilin-type PPIase family. PPIL4 subfamily.

The protein resides in the nucleus. It catalyses the reaction [protein]-peptidylproline (omega=180) = [protein]-peptidylproline (omega=0). In terms of biological role, PPIases accelerate the folding of proteins. It catalyzes the cis-trans isomerization of proline imidic peptide bonds in oligopeptides. The sequence is that of Peptidyl-prolyl cis-trans isomerase-like 4 (cyp6) from Aspergillus oryzae (strain ATCC 42149 / RIB 40) (Yellow koji mold).